The sequence spans 163 residues: Nucleotide-binding protein BCG9842_B4128 (163 aa).

It belongs to the YajQ family.

Nucleotide-binding protein. This is Nucleotide-binding protein BCG9842_B4128 from Bacillus cereus (strain G9842).